Consider the following 237-residue polypeptide: uncharacterized protein (237 aa).

One can recognise a DPCK domain in the interval 13-218 (VVGLSGGVAT…KSWKPYIFRV (206 aa)). 18-25 (GGVATGKS) is an ATP binding site.

Belongs to the CoaE family.

This is an uncharacterized protein from Caenorhabditis elegans.